The sequence spans 860 residues: JmjC domain-containing histone demethylation protein 1 (860 aa).

Disordered stretches follow at residues 1-45 (MSEQ…EEGK), 117-212 (STSP…PKRK), and 408-440 (DVKEKGRGNDSREGSEIRKEGSHLTEGDNGGEI). The segment at 23-116 (PEPCPLCRET…KWYCAPCLAR (94 aa)) adopts a PHD-type zinc-finger fold. Basic and acidic residues-rich tracts occupy residues 183–192 (IDMKSEREQQ) and 408–433 (DVKEKGRGNDSREGSEIRKEGSHLTE). A JmjC domain is found at 416–579 (NDSREGSEIR…TQLRLRQIEI (164 aa)). Thr-471 is a substrate binding site. Positions 474 and 476 each coordinate Fe cation. Lys-491 is a substrate binding site. His-547 lines the Fe cation pocket. Disordered stretches follow at residues 744-795 (HPPA…ANEN) and 837-860 (GPKLDKEKISQPQGKVEEDMDIDH). Residues 750-763 (ENRQSPQIETTTVQ) are compositionally biased toward polar residues. Positions 767–795 (PSTSSSDAISGSGPGASPGASANGGANEN) are enriched in low complexity.

The protein belongs to the JHDM1 histone demethylase family. Fe(2+) is required as a cofactor.

The protein localises to the nucleus. It catalyses the reaction N(6),N(6)-dimethyl-L-lysyl(36)-[histone H3] + 2 2-oxoglutarate + 2 O2 = L-lysyl(36)-[histone H3] + 2 formaldehyde + 2 succinate + 2 CO2. Histone demethylase that specifically demethylates 'Lys-36' of histone H3, thereby playing a central role in histone code. The chain is JmjC domain-containing histone demethylation protein 1 (JHD1) from Cryptococcus neoformans var. neoformans serotype D (strain JEC21 / ATCC MYA-565) (Filobasidiella neoformans).